The primary structure comprises 158 residues: 6,7-dimethyl-8-ribityllumazine synthase (158 aa).

5-amino-6-(D-ribitylamino)uracil contacts are provided by residues phenylalanine 23, 61–63 (SFE), and 85–87 (AVI). A (2S)-2-hydroxy-3-oxobutyl phosphate-binding site is contributed by 90–91 (ET). Histidine 93 serves as the catalytic Proton donor. Phenylalanine 118 lines the 5-amino-6-(D-ribitylamino)uracil pocket. A (2S)-2-hydroxy-3-oxobutyl phosphate-binding site is contributed by arginine 132.

The protein belongs to the DMRL synthase family.

It catalyses the reaction (2S)-2-hydroxy-3-oxobutyl phosphate + 5-amino-6-(D-ribitylamino)uracil = 6,7-dimethyl-8-(1-D-ribityl)lumazine + phosphate + 2 H2O + H(+). It functions in the pathway cofactor biosynthesis; riboflavin biosynthesis; riboflavin from 2-hydroxy-3-oxobutyl phosphate and 5-amino-6-(D-ribitylamino)uracil: step 1/2. In terms of biological role, catalyzes the formation of 6,7-dimethyl-8-ribityllumazine by condensation of 5-amino-6-(D-ribitylamino)uracil with 3,4-dihydroxy-2-butanone 4-phosphate. This is the penultimate step in the biosynthesis of riboflavin. The sequence is that of 6,7-dimethyl-8-ribityllumazine synthase from Prochlorococcus marinus (strain MIT 9301).